The sequence spans 397 residues: MVHLTSALLVAGAAFAAAAPMNHIFERQDTCSVSDNYPTVNSAKLPDPFTTASGEKVTTKDQFECRRAEINKILQQYELGEYPGPPDSVEASLSGNSITVRVTVGSKSISFSASIRKPSGAGPFPAIIGIGGASIPIPSNVATITFNNDEFGAQMGSGSRGQGKFYDLFGRDHSAGSLTAWAWGVDRLIDGLEQVGAQASGIDTKRLGVTGCSRNGKGAFITGALVDRIALTIPQESGAGGAACWRISDQQKAAGANIQTAAQIITENPWFSRNFDPHVNSITSVPQDHHLLAALIVPRGLAVFENNIDWLGPVSTTGCMAAGRLIYKAYGVPNNMGFSLVGGHNHCQFPSSQNQDLNSYINYFLLGQGSPSGVEHSDVNVNVAEWAPWGAGAPTLA.

Residues Met1 to Ala18 form the signal peptide. Intrachain disulfides connect Cys31–Cys65, Cys212–Cys347, and Cys244–Cys319. A GXSYXG catalytic site motif motif is present at residues Gly211–Gly216. The active-site Nucleophile is Ser213. Substrate-binding residues include Lys217, Gln259, Glu267, and Trp310. His346 functions as the Proton donor/acceptor in the catalytic mechanism.

It belongs to the carbohydrate esterase 15 (CE15) family.

The protein localises to the secreted. It carries out the reaction a 4-O-methyl-alpha-D-glucuronosyl ester derivative + H2O = 4-O-methyl-alpha-D-glucuronate derivative + an alcohol + H(+). Functionally, glucuronoyl esterase which may play a significant role in biomass degradation, as it is considered to disconnect hemicellulose from lignin through the hydrolysis of the ester bond between 4-O-methyl-D-glucuronic acid residues of glucuronoxylans and aromatic alcohols of lignin. The chain is 4-O-methyl-glucuronoyl methylesterase (ge2) from Thermothelomyces thermophilus (strain ATCC 42464 / BCRC 31852 / DSM 1799) (Sporotrichum thermophile).